The chain runs to 130 residues: Large ribosomal subunit protein eL34 (130 aa).

Positions 111–130 (KPVSKPPKIQKTAKAASKSK) are disordered.

Belongs to the eukaryotic ribosomal protein eL34 family.

The sequence is that of Large ribosomal subunit protein eL34 (RpL34) from Aedes albopictus (Asian tiger mosquito).